The following is a 290-amino-acid chain: MKSGFVSIIGRPSTGKSTLLNSICGHQISIISSTPQTTRNKIKGIFTDKRGQIIFIDTPGFHLSKKKFNIALMNNVHSAITETELILYVIDIQDEPGIEENEILTIISKSKINFLVVINKIDIQKTKEREIMIFLEKKGIKKDNIIKISAEQKINIEEIKDKIYANLQEGPLYYPEEYYTDQEMNLRTSEIIRGVTIKKLKEELPYSLYTQIEILEDRKNKLFIKANIIVAGESQKGIIVGKGGQGIKAIGEEARKIISKIFEKKCDLFLQVKLRKNWNKNSKLIKNLIN.

The Era-type G domain maps to Lys-2 to Glu-169. A G1 region spans residues Gly-10–Ser-17. Position 10-17 (Gly-10–Ser-17) interacts with GTP. The G2 stretch occupies residues Gln-36–Asn-40. A G3 region spans residues Asp-57–Gly-60. GTP contacts are provided by residues Asp-57–Phe-61 and Asn-119–Asp-122. The tract at residues Asn-119 to Asp-122 is G4. Residues Ile-148–Ala-150 form a G5 region. Residues Leu-200 to Lys-276 enclose the KH type-2 domain.

Belongs to the TRAFAC class TrmE-Era-EngA-EngB-Septin-like GTPase superfamily. Era GTPase family. In terms of assembly, monomer.

Its subcellular location is the cytoplasm. It localises to the cell inner membrane. In terms of biological role, an essential GTPase that binds both GDP and GTP, with rapid nucleotide exchange. Plays a role in 16S rRNA processing and 30S ribosomal subunit biogenesis and possibly also in cell cycle regulation and energy metabolism. The protein is GTPase Era of Borrelia hermsii (strain HS1 / DAH).